The primary structure comprises 199 residues: Urease accessory protein UreG (199 aa).

8–15 (GPVGSGKT) contributes to the GTP binding site.

It belongs to the SIMIBI class G3E GTPase family. UreG subfamily. As to quaternary structure, homodimer. UreH, UreF and UreG form a complex that acts as a GTP-hydrolysis-dependent molecular chaperone, activating the urease apoprotein by helping to assemble the nickel containing metallocenter of UreC. The UreE protein probably delivers the nickel.

The protein localises to the cytoplasm. In terms of biological role, facilitates the functional incorporation of the urease nickel metallocenter. This process requires GTP hydrolysis, probably effectuated by UreG. This Helicobacter pylori (strain G27) protein is Urease accessory protein UreG.